Here is a 333-residue protein sequence, read N- to C-terminus: Glutamyl endopeptidase (333 aa).

The signal sequence occupies residues 1-29 (MKGKFLKVSSLFVATLTTATLVSSPAANA). The propeptide occupies 30–68 (LSSKAMDNHPQQSQSSKQQTPKIQKGGNLKPLEQREHAN). The disordered stretch occupies residues 33–61 (KAMDNHPQQSQSSKQQTPKIQKGGNLKPL). The segment covering 40–54 (QQSQSSKQQTPKIQK) has biased composition (low complexity). Residues His-119, Asp-161, and Ser-237 each act as charge relay system in the active site. Residues 283-333 (FANDDQPNNPDNPDNPNNPDNPNNPDNPNNPNNPDNPDNGDNNNSDNPDAA) form a disordered region. A compositionally biased stretch (low complexity) spans 286-333 (DDQPNNPDNPDNPNNPDNPNNPDNPNNPNNPDNPDNGDNNNSDNPDAA). Tandem repeats lie at residues 289–291 (PNN), 292–294 (PDN), 295–297 (PDN), 298–300 (PNN), 301–303 (PDN), 304–306 (PNN), 307–309 (PDN), 310–312 (PNN), 313–315 (PNN), 316–318 (PDN), and 319–321 (PDN). Residues 289–321 (PNNPDNPDNPNNPDNPNNPDNPNNPNNPDNPDN) are 11 X 3 AA repeats of P-[DN]-N.

This sequence belongs to the peptidase S1B family. Proteolytically cleaved by aureolysin (aur). This cleavage leads to the activation of SspA.

It is found in the secreted. It carries out the reaction Preferential cleavage: Glu-|-Xaa, Asp-|-Xaa.. Preferentially cleaves peptide bonds on the carboxyl-terminal side of aspartate and glutamate. Along with other extracellular proteases it is involved in colonization and infection of human tissues. Required for proteolytic maturation of thiol protease SspB and inactivation of SspC, an inhibitor of SspB. It is the most important protease for degradation of fibronectin-binding protein (FnBP) and surface protein A, which are involved in adherence to host cells. May also protect bacteria against host defense mechanism by cleaving the immunoglobulin classes IgG, IgA and IgM. May be involved in the stability of secreted lipases. This chain is Glutamyl endopeptidase (sspA), found in Staphylococcus aureus (strain MSSA476).